Reading from the N-terminus, the 960-residue chain is Gamma-aminobutyric acid type B receptor subunit 1 (960 aa).

Positions 1-19 (MLLLLLVPLFLRPLGAGGA) are cleaved as a signal peptide. The Extracellular portion of the chain corresponds to 20-590 (QTPNVTSEGC…KTFRFLSQKL (571 aa)). N-linked (GlcNAc...) asparagine glycans are attached at residues asparagine 23 and asparagine 83. Sushi domains lie at 29–95 (CQII…PSRC) and 97–158 (RICS…HCQV). 3 cysteine pairs are disulfide-bonded: cysteine 99/cysteine 144, cysteine 130/cysteine 156, and cysteine 219/cysteine 245. Residues serine 246, serine 269, histidine 286, and tyrosine 366 each contribute to the 4-aminobutanoate site. Cysteines 375 and 409 form a disulfide. N-linked (GlcNAc...) asparagine glycans are attached at residues asparagine 408 and asparagine 439. Residue glutamate 465 coordinates 4-aminobutanoate. N-linked (GlcNAc...) asparagine glycans are attached at residues asparagine 481, asparagine 501, and asparagine 513. A helical transmembrane segment spans residues 591 to 611 (FISVSVLSSLGIVLAVVCLSF). Topologically, residues 612 to 630 (NIYNSHVRYIQNSQPNLNN) are cytoplasmic. Residues 631–651 (LTAVGCSLALAAVFPLGLDGY) traverse the membrane as a helical segment. Residues 652–666 (HIGRSQFPFVCQARL) are Extracellular-facing. Residues 667-687 (WLLGLGFSLGYGSMFTKIWWV) traverse the membrane as a helical segment. Residues 688–709 (HTVFTKKEEKKEWRKTLEPWKL) are Cytoplasmic-facing. A helical transmembrane segment spans residues 710 to 730 (YATVGLLVGMDILTLAIWQIV). The Extracellular segment spans residues 731–767 (DPLHRTIETFAKEEPKEDIDVSILPQLEHCSSKKMNT). The helical transmembrane segment at 768–788 (WLGIFYGYKGLLLLLGIFLAY) threads the bilayer. Topologically, residues 789–803 (ETKSVSTEKINDHRA) are cytoplasmic. Residues 804-824 (VGMAIYNVAVLCLITAPVTMI) form a helical membrane-spanning segment. Topologically, residues 825-832 (LSSQQDAA) are extracellular. A helical transmembrane segment spans residues 833–853 (FAFASLAIVFSSYITLVVLFV). The Cytoplasmic segment spans residues 854-960 (PKMRRLITRG…DGSRVHLLYK (107 aa)). Disordered stretches follow at residues 866-891 (QSEAQDTMKTGSSTNNNEEEKSRLLE) and 908-960 (VSEL…LLYK). The segment covering 867–879 (SEAQDTMKTGSST) has biased composition (polar residues). Residues 868-924 (EAQDTMKTGSSTNNNEEEKSRLLEKENRELEKIIAEKEERVSELRHQLQSRQQIRSR) are a coiled coil. Position 872 is a phosphothreonine (threonine 872). Residues 887–915 (SRLLEKENRELEKIIAEKEERVSELRHQL) form an interaction with ATF4 region. Threonine 929 carries the phosphothreonine modification.

This sequence belongs to the G-protein coupled receptor 3 family. GABA-B receptor subfamily. As to quaternary structure, heterodimer of GABBR1 and GABBR2. Homodimers may form, but are inactive. Interacts (via C-terminus) with ATF4 (via leucine zipper domain). Interacts with JAKMIP1. Interacts with KCTD8, KCTD12, KCTD12B and KCTD16; this interaction determines the pharmacology and kinetics of the receptor response, the KCTD proteins markedly accelerating the GABA-B response, although to different extents. In terms of tissue distribution, expressed in neuronal tissue including cortex, cerebellum and spinal cord. Not detected in non-neuronal tissues including heart, liver, spleen and kidney.

The protein localises to the cell membrane. The protein resides in the postsynaptic cell membrane. It localises to the cell projection. Its subcellular location is the dendrite. Functionally, component of a heterodimeric G-protein coupled receptor for GABA, formed by GABBR1 and GABBR2. Within the heterodimeric GABA receptor, only GABBR1 seems to bind agonists, while GABBR2 mediates coupling to G proteins. Ligand binding causes a conformation change that triggers signaling via guanine nucleotide-binding proteins (G proteins) and modulates the activity of down-stream effectors, such as adenylate cyclase. Signaling inhibits adenylate cyclase, stimulates phospholipase A2, activates potassium channels, inactivates voltage-dependent calcium-channels and modulates inositol phospholipid hydrolysis. Calcium is required for high affinity binding to GABA. Plays a critical role in the fine-tuning of inhibitory synaptic transmission. Pre-synaptic GABA receptor inhibits neurotransmitter release by down-regulating high-voltage activated calcium channels, whereas postsynaptic GABA receptor decreases neuronal excitability by activating a prominent inwardly rectifying potassium (Kir) conductance that underlies the late inhibitory postsynaptic potentials. Not only implicated in synaptic inhibition but also in hippocampal long-term potentiation, slow wave sleep, muscle relaxation and antinociception. In Mus musculus (Mouse), this protein is Gamma-aminobutyric acid type B receptor subunit 1 (Gabbr1).